Here is a 173-residue protein sequence, read N- to C-terminus: Mediator of RNA polymerase II transcription subunit 19 (173 aa).

The disordered stretch occupies residues leucine 139 to isoleucine 173.

Belongs to the Mediator complex subunit 19 family. Component of the Mediator complex.

The protein resides in the nucleus. Its function is as follows. Component of the Mediator complex, a coactivator involved in the regulated transcription of nearly all RNA polymerase II-dependent genes. Mediator functions as a bridge to convey information from gene-specific regulatory proteins to the basal RNA polymerase II transcription machinery. Mediator is recruited to promoters by direct interactions with regulatory proteins and serves as a scaffold for the assembly of a functional preinitiation complex with RNA polymerase II and the general transcription factors. This chain is Mediator of RNA polymerase II transcription subunit 19 (ROX3), found in Scheffersomyces stipitis (strain ATCC 58785 / CBS 6054 / NBRC 10063 / NRRL Y-11545) (Yeast).